Consider the following 166-residue polypeptide: Twist-related protein (166 aa).

Low complexity predominate over residues 1 to 18 (MMQEESSSPVSPVDSLSN). The interval 1–83 (MMQEESSSPV…RVMANVRERQ (83 aa)) is disordered. The span at 28–39 (SKRGCRKRRSAR) shows a compositional bias: basic residues. Positions 57-75 (ASSTGSSPQSFEELQSQRV) are enriched in polar residues. Residues 72–123 (SQRVMANVRERQRTQSLNEAFSSLRKIIPTLPSDKLSKIQTLKLASRYIDFL) form the bHLH domain.

Efficient DNA binding requires dimerization with another bHLH protein. Homodimer. Subset of mesodermal cells.

The protein localises to the nucleus. Probable transcription factor, which may be involved, with other proteins, in establishing the pattern of cell type-specific gene expression in mesodermal cell subgroups. The chain is Twist-related protein (twist1) from Xenopus laevis (African clawed frog).